The following is a 334-amino-acid chain: Lipoyl synthase (334 aa).

Residues Cys-71, Cys-76, Cys-82, Cys-97, Cys-101, Cys-104, and Ser-312 each contribute to the [4Fe-4S] cluster site. The Radical SAM core domain maps to 83 to 301 (WSHGTATFMV…RQEGLRRGFR (219 aa)).

It belongs to the radical SAM superfamily. Lipoyl synthase family. It depends on [4Fe-4S] cluster as a cofactor.

Its subcellular location is the cytoplasm. The enzyme catalyses [[Fe-S] cluster scaffold protein carrying a second [4Fe-4S](2+) cluster] + N(6)-octanoyl-L-lysyl-[protein] + 2 oxidized [2Fe-2S]-[ferredoxin] + 2 S-adenosyl-L-methionine + 4 H(+) = [[Fe-S] cluster scaffold protein] + N(6)-[(R)-dihydrolipoyl]-L-lysyl-[protein] + 4 Fe(3+) + 2 hydrogen sulfide + 2 5'-deoxyadenosine + 2 L-methionine + 2 reduced [2Fe-2S]-[ferredoxin]. It functions in the pathway protein modification; protein lipoylation via endogenous pathway; protein N(6)-(lipoyl)lysine from octanoyl-[acyl-carrier-protein]: step 2/2. Catalyzes the radical-mediated insertion of two sulfur atoms into the C-6 and C-8 positions of the octanoyl moiety bound to the lipoyl domains of lipoate-dependent enzymes, thereby converting the octanoylated domains into lipoylated derivatives. This chain is Lipoyl synthase, found in Halorhodospira halophila (strain DSM 244 / SL1) (Ectothiorhodospira halophila (strain DSM 244 / SL1)).